Reading from the N-terminus, the 106-residue chain is Iron-sulfur cluster assembly protein CyaY (106 aa).

This sequence belongs to the frataxin family.

In terms of biological role, involved in iron-sulfur (Fe-S) cluster assembly. May act as a regulator of Fe-S biogenesis. The protein is Iron-sulfur cluster assembly protein CyaY of Photorhabdus laumondii subsp. laumondii (strain DSM 15139 / CIP 105565 / TT01) (Photorhabdus luminescens subsp. laumondii).